Here is a 233-residue protein sequence, read N- to C-terminus: Small ribosomal subunit protein uS3 (233 aa).

The KH type-2 domain occupies 39–107 (VRQFLTKELS…PAQINTYEIR (69 aa)).

It belongs to the universal ribosomal protein uS3 family. In terms of assembly, part of the 30S ribosomal subunit. Forms a tight complex with proteins S10 and S14.

Functionally, binds the lower part of the 30S subunit head. Binds mRNA in the 70S ribosome, positioning it for translation. In Hamiltonella defensa subsp. Acyrthosiphon pisum (strain 5AT), this protein is Small ribosomal subunit protein uS3.